A 65-amino-acid chain; its full sequence is Metallothionein-3 (65 aa).

Met-1 carries the post-translational modification N-acetylmethionine. The tract at residues 1 to 30 (MDPEACPCPTGGSCTCSDSCKCEGCTCASS) is beta. A divalent metal cation is bound by residues Cys-6, Cys-8, Cys-14, Cys-16, Cys-20, Cys-22, Cys-25, and Cys-27. Positions 31–65 (KKSCCPAECEKCAKDCVCKGGEGAEAEEKKCGCCQ) are alpha. Ser-33 is modified (phosphoserine). Cys-34, Cys-35, Cys-39, Cys-42, Cys-46, Cys-48, Cys-61, Cys-63, and Cys-64 together coordinate a divalent metal cation.

Belongs to the metallothionein superfamily. Type 1 family.

Functionally, binds heavy metals. Contains five zinc and one copper atoms per polypeptide chain and only a negligible amount of cadmium. The sequence is that of Metallothionein-3 (MT3) from Ovis aries (Sheep).